The primary structure comprises 150 residues: MQVLVDADACPVVVKEMLYRAAQRLEVCVTLVANKFLRTPPSRFIRALQVPAGFDAADDRIVELVIHGDLVITADIPLAAAALEKGAYVLDPRGSWFSRENIQERLTMRDVMEQLRSSGIDTGGPAPYAAQDGKAFAGQLDRFLARHVSP.

The protein belongs to the UPF0178 family.

This chain is UPF0178 protein Reut_B5138, found in Cupriavidus pinatubonensis (strain JMP 134 / LMG 1197) (Cupriavidus necator (strain JMP 134)).